Here is a 42-residue protein sequence, read N- to C-terminus: Protein Tat (42 aa).

The segment at 1 to 24 (MEPVDPNLEPWNHPGSQPKTACNQ) is interaction with human CREBBP. The segment at 22 to 37 (CNQCYCKKCSYHCLVC) is cysteine-rich. Lys-28 carries the post-translational modification N6-acetyllysine; by host PCAF.

This sequence belongs to the lentiviruses Tat family. As to quaternary structure, interacts with host CCNT1. Associates with the P-TEFb complex composed at least of Tat, P-TEFb (CDK9 and CCNT1), TAR RNA, RNA Pol II. Recruits the HATs CREBBP, TAF1/TFIID, EP300, PCAF and GCN5L2. Interacts with host KAT5/Tip60; this interaction targets the latter to degradation. Interacts with the host deacetylase SIRT1. Interacts with host capping enzyme RNGTT; this interaction stimulates RNGTT. Binds to host KDR, and to the host integrins ITGAV/ITGB3 and ITGA5/ITGB1. Interacts with host KPNB1/importin beta-1 without previous binding to KPNA1/importin alpha-1. Interacts with EIF2AK2. Interacts with host nucleosome assembly protein NAP1L1; this interaction may be required for the transport of Tat within the nucleus, since the two proteins interact at the nuclear rim. Interacts with host C1QBP/SF2P32; this interaction involves lysine-acetylated Tat. Interacts with the host chemokine receptors CCR2, CCR3 and CXCR4. Interacts with host DPP4/CD26; this interaction may trigger an anti-proliferative effect. Interacts with host LDLR. Interacts with the host extracellular matrix metalloproteinase MMP1. Interacts with host PRMT6; this interaction mediates Tat's methylation. Interacts with, and is ubiquitinated by MDM2/Hdm2. Interacts with host PSMC3 and HTATIP2. Interacts with STAB1; this interaction may overcome SATB1-mediated repression of IL2 and IL2RA (interleukin) in T cells by binding to the same domain than HDAC1. Interacts (when acetylated) with human CDK13, thereby increasing HIV-1 mRNA splicing and promoting the production of the doubly spliced HIV-1 protein Nef. Interacts with host TBP; this interaction modulates the activity of transcriptional pre-initiation complex. Interacts with host RELA. Interacts with host PLSCR1; this interaction negatively regulates Tat transactivation activity by altering its subcellular distribution. Post-translationally, phosphorylated by EIF2AK2 on serine and threonine residues adjacent to the basic region important for TAR RNA binding and function. Phosphorylation of Tat by EIF2AK2 is dependent on the prior activation of EIF2AK2 by dsRNA. Asymmetrical arginine methylation by host PRMT6 seems to diminish the transactivation capacity of Tat and affects the interaction with host CCNT1. In terms of processing, polyubiquitination by host MDM2 does not target Tat to degradation, but activates its transactivation function and fosters interaction with CCNT1 and TAR RNA.

The protein localises to the host nucleus. The protein resides in the host nucleolus. Its subcellular location is the host cytoplasm. It localises to the secreted. In terms of biological role, transcriptional activator that increases RNA Pol II processivity, thereby increasing the level of full-length viral transcripts. Recognizes a hairpin structure at the 5'-LTR of the nascent viral mRNAs referred to as the transactivation responsive RNA element (TAR) and recruits the cyclin T1-CDK9 complex (P-TEFb complex) that will in turn hyperphosphorylate the RNA polymerase II to allow efficient elongation. The CDK9 component of P-TEFb and other Tat-activated kinases hyperphosphorylate the C-terminus of RNA Pol II that becomes stabilized and much more processive. Other factors such as HTATSF1/Tat-SF1, SUPT5H/SPT5, and HTATIP2 are also important for Tat's function. Besides its effect on RNA Pol II processivity, Tat induces chromatin remodeling of proviral genes by recruiting the histone acetyltransferases (HATs) CREBBP, EP300 and PCAF to the chromatin. This also contributes to the increase in proviral transcription rate, especially when the provirus integrates in transcriptionally silent region of the host genome. To ensure maximal activation of the LTR, Tat mediates nuclear translocation of NF-kappa-B by interacting with host RELA. Through its interaction with host TBP, Tat may also modulate transcription initiation. Tat can reactivate a latently infected cell by penetrating in it and transactivating its LTR promoter. In the cytoplasm, Tat is thought to act as a translational activator of HIV-1 mRNAs. Functionally, extracellular circulating Tat can be endocytosed by surrounding uninfected cells via the binding to several surface receptors such as CD26, CXCR4, heparan sulfate proteoglycans (HSPG) or LDLR. Neurons are rarely infected, but they internalize Tat via their LDLR. Through its interaction with nuclear HATs, Tat is potentially able to control the acetylation-dependent cellular gene expression. Modulates the expression of many cellular genes involved in cell survival, proliferation or in coding for cytokines or cytokine receptors. Tat plays a role in T-cell and neurons apoptosis. Tat induced neurotoxicity and apoptosis probably contribute to neuroAIDS. Circulating Tat also acts as a chemokine-like and/or growth factor-like molecule that binds to specific receptors on the surface of the cells, affecting many cellular pathways. In the vascular system, Tat binds to ITGAV/ITGB3 and ITGA5/ITGB1 integrins dimers at the surface of endothelial cells and competes with bFGF for heparin-binding sites, leading to an excess of soluble bFGF. The chain is Protein Tat from Human immunodeficiency virus type 1 group M subtype C (isolate ETH2220) (HIV-1).